The chain runs to 92 residues: Small ribosomal subunit protein uS19 (92 aa).

Belongs to the universal ribosomal protein uS19 family.

In terms of biological role, protein S19 forms a complex with S13 that binds strongly to the 16S ribosomal RNA. In Vibrio parahaemolyticus serotype O3:K6 (strain RIMD 2210633), this protein is Small ribosomal subunit protein uS19.